Reading from the N-terminus, the 501-residue chain is Lysine--tRNA ligase (501 aa).

2 residues coordinate Mg(2+): E404 and E411.

This sequence belongs to the class-II aminoacyl-tRNA synthetase family. In terms of assembly, homodimer. The cofactor is Mg(2+).

The protein localises to the cytoplasm. It carries out the reaction tRNA(Lys) + L-lysine + ATP = L-lysyl-tRNA(Lys) + AMP + diphosphate. The chain is Lysine--tRNA ligase from Campylobacter jejuni subsp. jejuni serotype O:6 (strain 81116 / NCTC 11828).